A 975-amino-acid polypeptide reads, in one-letter code: 5'-3' exoribonuclease 2 homolog (975 aa).

A CCHC-type zinc finger spans residues R262 to G279. 2 disordered regions span residues M424 to Q443 and S505 to K532. The segment at D534–E787 is interaction with paxt-1. Residues E804–R821 are compositionally biased toward basic and acidic residues. The tract at residues E804–R975 is disordered. 3 stretches are compositionally biased toward gly residues: residues R850–R860, N886–P895, and G908–S932.

It belongs to the 5'-3' exonuclease family. XRN2/RAT1 subfamily. As to quaternary structure, interacts with paxt-1 (via N-terminus); the interaction is direct and results in stabilization of xrn-2 in the complex. Expressed in the pharyngeal myoepithelium and intestine. Also expressed in several anterior neurons including the sensory neurons, as well as the interneuron PVT and the pharyngeal motorneuron M5.

The protein resides in the nucleus. Possesses 5'-&gt;3' exoribonuclease activity. Plays a role in maintenance of steady-state concentration and turnover of microRNAs (miRNA) by degradation of mature miRNA. Degradation role is enhanced when in complex with paxt-1. Partially redundant to xrn-1 in miRNA guide strand degradation. Implicated in differential regulation of mRNAs such as let-7 by controlling the accumulation of mature miRNA. Positively regulates molting of the pharyngeal cuticle. This chain is 5'-3' exoribonuclease 2 homolog, found in Caenorhabditis elegans.